The following is a 1003-amino-acid chain: Helicase MOV-10 (1003 aa).

N6-acetyllysine is present on lysine 148. Phosphothreonine occurs at positions 160 and 254. Phosphoserine is present on serine 432. 524 to 531 contributes to the ATP binding site; it reads GPPGTGKT. Residues 645-648 carry the DEAG box motif; sequence DEAG. Residues 921–965 are interaction with AGO2 and APOBEC3G; that stretch reads NPLLLGHDPDWKVFLEFCKENGGYTGCPFPAKLDLQQGQNLLQGL. A disordered region spans residues 966–1003; the sequence is SKLSPSTSGPHSHDYLPQEREGEGGLSLQVEPEWRNEL. Phosphoserine occurs at positions 969 and 977. A compositionally biased stretch (basic and acidic residues) spans 976-988; it reads HSHDYLPQEREGE.

This sequence belongs to the DNA2/NAM7 helicase family. SDE3 subfamily. Interacts with DICER1, AGO2, TARBP2, EIF6 and RPL7A (60S ribosome subunit); they form a large RNA-induced silencing complex (RISC). Interacts with APOBEC3G in an RNA-dependent manner. Interacts with TRIM71 (via NHL repeats) in an RNA-dependent manner. Interacts with both protein products of LIRE1, ORF1p and ORF2p. Interacts with TUT4 and, to a lesser extent, TUT7; the interactions are RNA-dependent. Interacts with AGO2, TNRC6B and UPF1; the interactions are direct and RNA-dependent. Interacts with FMR1; this interaction is direct, occurs in an RNA-dependent manner on polysomes and induces association of MOV10 with RNAs. Interacts with SHFL; the interaction increases in presence of RNA. Interacts with DHX34; the interaction is RNA-independent. Interacts with IKBKE. Interacts with RBM46. As to quaternary structure, (Microbial infection) Interacts with the human hepatitis delta virus (HDV) antigen HDAg. In terms of assembly, (Microbial infection) Interacts with HIV-1 protein GAG. Ubiquitinated by the DCX(DCAF12) complex that specifically recognizes the glutamate-leucine (Glu-Leu) degron at the C-terminus, leading to its degradation. In terms of processing, (Microbial infection) Cleaved and targeted for degradation by picornavirus proteases.

Its subcellular location is the cytoplasm. It is found in the P-body. The protein resides in the cytoplasmic ribonucleoprotein granule. The protein localises to the stress granule. It localises to the nucleus. It carries out the reaction ATP + H2O = ADP + phosphate + H(+). In terms of biological role, 5' to 3' RNA helicase that is involved in a number of cellular roles ranging from mRNA metabolism and translation, modulation of viral infectivity, inhibition of retrotransposition, or regulation of synaptic transmission. Plays an important role in innate antiviral immunity by promoting type I interferon production. Mechanistically, specifically uses IKKepsilon/IKBKE as the mediator kinase for IRF3 activation. Blocks HIV-1 virus replication at a post-entry step. Counteracts HIV-1 Vif-mediated degradation of APOBEC3G through its helicase activity by interfering with the ubiquitin-proteasome pathway. Also inhibits hepatitis B virus/HBV replication by interacting with HBV RNA and thereby inhibiting the early step of viral reverse transcription. Contributes to UPF1 mRNA target degradation by translocation along 3' UTRs. Required for microRNA (miRNA)-mediated gene silencing by the RNA-induced silencing complex (RISC). Required for both miRNA-mediated translational repression and miRNA-mediated cleavage of complementary mRNAs by RISC. In cooperation with FMR1, regulates miRNA-mediated translational repression by AGO2. Restricts retrotransposition of long interspersed element-1 (LINE-1) in cooperation with TUT4 and TUT7 counteracting the RNA chaperonne activity of L1RE1. Facilitates LINE-1 uridylation by TUT4 and TUT7. Required for embryonic viability and for normal central nervous system development and function. Plays two critical roles in early brain development: suppresses retroelements in the nucleus by directly inhibiting cDNA synthesis, while regulates cytoskeletal mRNAs to influence neurite outgrowth in the cytosol. May function as a messenger ribonucleoprotein (mRNP) clearance factor. (Microbial infection) Required for RNA-directed transcription and replication of the human hepatitis delta virus (HDV). Interacts with small capped HDV RNAs derived from genomic hairpin structures that mark the initiation sites of RNA-dependent HDV RNA transcription. The protein is Helicase MOV-10 of Homo sapiens (Human).